The sequence spans 510 residues: Protein phosphatase EYA3 (510 aa).

2 disordered regions span residues 1-32 (MQEPREQTLSQVNNPDASDEKPETSSLASNLS) and 175-233 (YQTE…DASS). Positions 7 to 16 (QTLSQVNNPD) are enriched in polar residues. A compositionally biased stretch (low complexity) spans 192-203 (LPSDSSASPPLS). A phosphoserine mark is found at Ser199 and Ser203. Asp246 functions as the Nucleophile in the catalytic mechanism. Positions 246 and 248 each coordinate Mg(2+). Asp248 serves as the catalytic Proton donor. Phosphoserine is present on residues Ser375 and Ser409. Residue Asp474 coordinates Mg(2+).

Belongs to the HAD-like hydrolase superfamily. EYA family. Interacts with SIX1 and DACH1, and probably SIX2, SIX4 and SIX5. Requires Mg(2+) as cofactor. Ser-203 phosphorylation is required for localization at sites of DNA damage and directing interaction with H2AX. Expressed in branchial arches, CNS and developing eye.

The protein localises to the cytoplasm. The protein resides in the nucleus. The enzyme catalyses O-phospho-L-tyrosyl-[protein] + H2O = L-tyrosyl-[protein] + phosphate. In terms of biological role, tyrosine phosphatase that specifically dephosphorylates 'Tyr-142' of histone H2AX (H2AXY142ph). 'Tyr-142' phosphorylation of histone H2AX plays a central role in DNA repair and acts as a mark that distinguishes between apoptotic and repair responses to genotoxic stress. Promotes efficient DNA repair by dephosphorylating H2AX, promoting the recruitment of DNA repair complexes containing MDC1. Its function as histone phosphatase probably explains its role in transcription regulation during organogenesis. The phosphatase activity has been shown in vitro. Coactivates SIX1. Seems to coactivate SIX2, SIX4 and SIX5. The repression of precursor cell proliferation in myoblasts by SIX1 is switched to activation through recruitment of EYA3 to the SIX1-DACH1 complex and seems to be dependent on EYA3 phosphatase activity. May be involved in development of the eye. May play a role in mediating the induction and differentiation of cranial placodes. This chain is Protein phosphatase EYA3 (Eya3), found in Mus musculus (Mouse).